The sequence spans 686 residues: MATDPRQLLVTCALPYANGSIHLGHMLEHIQADIWVRYQRLRGNTVNFICADDAHGTPIMLKAQQMGITPEEMIAAVSEEHQKDFAGFDISFDNYHSTHSEENRELASHIYLELKKNGFISSRTISQLFDPEKEMFLPDRFVKGTCPKCKSEDQYGDNCDNCGETYSPTELINPKSAVSGATPVMKDSEHFFFDLPQFESMLKEWTRSGSLQNETANKMQEWFESGLQQWDISRDAPYFGFEIPGEKDKFFYVWLDAPVGYMASFKNLCDKRDDLNFDEYWKKDSTTELYHFIGKDIVYFHSLFWPAMLEGAGFRKPNNVFVHGYVTVNGAKMSKSKGTFIKASTYLNHLDPECLRYYYAAKLNSRIDDLDLNLEDFTQRVNADVVNKIVNLASRNAGFITKRFEGKLSAEFAEPELYNEFVAAAERIGQLYETREFSRAIREITALADKANQYIDEKAPWVLAKEEGKEKELQEVSSVGINLFRVLMAYLKPVMPELAARTEAFLNEELTWEAIATPLTDHEITKFKALFSRIDPKKVEAMIESSKEDAAAEAAAKEKAEAEKEQASQTELDKEPIADEIEFDAFSAVDMRIARIISCEEVPKANKLLKFQLDIGGETRQVFSGIKSAYKPEELEGKLTVMVANLKPRKMKFGMSEGMILAAGPGGSDLWILEPHEGAQPGMRVM.

The short motif at 15-25 (PYANGSIHLGH) is the 'HIGH' region element. Residues Cys146, Cys149, Cys159, and Cys162 each coordinate Zn(2+). The short motif at 332–336 (KMSKS) is the 'KMSKS' region element. An ATP-binding site is contributed by Lys335. The segment at 550–571 (AAAEAAAKEKAEAEKEQASQTE) is disordered. The tRNA-binding domain maps to 585-686 (AFSAVDMRIA…EGAQPGMRVM (102 aa)).

This sequence belongs to the class-I aminoacyl-tRNA synthetase family. MetG type 1 subfamily. Homodimer. Zn(2+) serves as cofactor.

It localises to the cytoplasm. It carries out the reaction tRNA(Met) + L-methionine + ATP = L-methionyl-tRNA(Met) + AMP + diphosphate. Is required not only for elongation of protein synthesis but also for the initiation of all mRNA translation through initiator tRNA(fMet) aminoacylation. The protein is Methionine--tRNA ligase of Vibrio atlanticus (strain LGP32) (Vibrio splendidus (strain Mel32)).